A 336-amino-acid polypeptide reads, in one-letter code: Phosphonate dehydrogenase (336 aa).

NAD(+)-binding positions include 155–156, glutamate 175, 235–237, and aspartate 261; these read AI and PCR. Residue arginine 237 is part of the active site. The active site involves glutamate 266. Histidine 292 serves as the catalytic Proton donor. An NAD(+)-binding site is contributed by 292-295; it reads HIGS.

Homodimer.

It catalyses the reaction phosphonate + NAD(+) + H2O = phosphate + NADH + H(+). Its activity is regulated as follows. Inhibited by NaCl, NADH and sulfite. Functionally, catalyzes phosphite (phosphonate) oxidation. This is Phosphonate dehydrogenase (ptxD) from Stutzerimonas stutzeri (Pseudomonas stutzeri).